Consider the following 114-residue polypeptide: QSVKESEGGLFKPTDTLTLTCTVSGFSLSSYTVAWVRQAPGZGLEWIGILKSSGSTYYASWAKSRSTITRTQNTVNLMBSLTAZDTATYFCARITHGYLGLMDVWGPGTLVTVS.

Gln1 bears the Pyrrolidone carboxylic acid mark. The region spanning 1 to 107 is the Ig-like domain; the sequence is QSVKESEGGL…YLGLMDVWGP (107 aa).

The sequence is that of Ig heavy chain V-A2 region BS-1 from Oryctolagus cuniculus (Rabbit).